A 337-amino-acid chain; its full sequence is Quercetin 2,3-dioxygenase (337 aa).

Cupin type-2 domains follow at residues 55–110 (KGDA…MQSH) and 226–281 (PKGD…RLDS). Fe cation-binding residues include His-62, His-64, Glu-69, His-103, His-234, His-236, Glu-241, and His-275.

In terms of assembly, homodimer. The cofactor is Fe(2+).

It carries out the reaction quercetin + O2 = 2-(3,4-dihydroxybenzoyloxy)-4,6-dihydroxybenzoate + CO. It functions in the pathway flavonoid metabolism; quercetin degradation. Performs the first step in the degradation of the flavonoid quercetin by a dioxygenase reaction. The enzyme catalyzes the cleavage of the O-heteroaromatic ring of the flavonol quercetin yielding the depside 2-protocatechuoyl-phloroglucinol carboxylic acid and carbon monoxide. This involves the remarkable dioxygenolytic cleavage of two carbon-carbon bonds. In Bacillus subtilis (strain 168), this protein is Quercetin 2,3-dioxygenase (qdoI).